A 347-amino-acid chain; its full sequence is GTPase Obg (347 aa).

The Obg domain occupies methionine 1–isoleucine 158. One can recognise an OBG-type G domain in the interval alanine 159–lysine 339. Residues glycine 165 to serine 172, phenylalanine 190 to threonine 194, aspartate 212 to glycine 215, serine 280 to aspartate 283, and serine 320 to leucine 322 contribute to the GTP site. Serine 172 and threonine 192 together coordinate Mg(2+).

It belongs to the TRAFAC class OBG-HflX-like GTPase superfamily. OBG GTPase family. In terms of assembly, monomer. It depends on Mg(2+) as a cofactor.

The protein localises to the cytoplasm. Functionally, an essential GTPase which binds GTP, GDP and possibly (p)ppGpp with moderate affinity, with high nucleotide exchange rates and a fairly low GTP hydrolysis rate. Plays a role in control of the cell cycle, stress response, ribosome biogenesis and in those bacteria that undergo differentiation, in morphogenesis control. The polypeptide is GTPase Obg (Campylobacter lari (strain RM2100 / D67 / ATCC BAA-1060)).